A 978-amino-acid chain; its full sequence is Regulator of MON1-CCZ1 complex homolog (978 aa).

Low complexity-rich tracts occupy residues Thr311–Ser351 and Asn479–Asn495. Disordered regions lie at residues Thr311–Gln363, Ser474–Thr546, Lys558–Val665, and Glu703–Ile727. Polar residues predominate over residues Thr496 to Met515. Residues Asn516 to Ser539 are compositionally biased toward low complexity. Positions Gly582–Gly591 are enriched in gly residues. 2 stretches are compositionally biased toward low complexity: residues Ser592–Asn663 and Asn710–Ile727. A Mic1 domain is found at Lys735–Leu908. The segment at Asn955–Asn978 is disordered.

It belongs to the RMC1 family.

The protein resides in the lysosome membrane. Its subcellular location is the late endosome membrane. Its function is as follows. May have a role in autophagy. This chain is Regulator of MON1-CCZ1 complex homolog, found in Dictyostelium discoideum (Social amoeba).